The following is a 229-amino-acid chain: Pyridoxal phosphate homeostasis protein (229 aa).

Lysine 36 carries the post-translational modification N6-(pyridoxal phosphate)lysine.

It belongs to the pyridoxal phosphate-binding protein YggS/PROSC family. As to quaternary structure, monomer.

Its function is as follows. Pyridoxal 5'-phosphate (PLP)-binding protein, which is involved in PLP homeostasis. The sequence is that of Pyridoxal phosphate homeostasis protein from Buchnera aphidicola subsp. Schizaphis graminum (strain Sg).